We begin with the raw amino-acid sequence, 729 residues long: Fatty acid oxidation complex subunit alpha (729 aa).

Residues M1–A189 are enoyl-CoA hydratase/isomerase. Substrate is bound at residue D296. The tract at residues P311 to A729 is 3-hydroxyacyl-CoA dehydrogenase. Residues M324, D343, V400–E402, K407, and S429 each bind NAD(+). H450 (for 3-hydroxyacyl-CoA dehydrogenase activity) is an active-site residue. N453 serves as a coordination point for NAD(+). The substrate site is built by N500 and Y660.

This sequence in the N-terminal section; belongs to the enoyl-CoA hydratase/isomerase family. The protein in the C-terminal section; belongs to the 3-hydroxyacyl-CoA dehydrogenase family. Heterotetramer of two alpha chains (FadB) and two beta chains (FadA).

The catalysed reaction is a (3S)-3-hydroxyacyl-CoA + NAD(+) = a 3-oxoacyl-CoA + NADH + H(+). It catalyses the reaction a (3S)-3-hydroxyacyl-CoA = a (2E)-enoyl-CoA + H2O. The enzyme catalyses a 4-saturated-(3S)-3-hydroxyacyl-CoA = a (3E)-enoyl-CoA + H2O. It carries out the reaction (3S)-3-hydroxybutanoyl-CoA = (3R)-3-hydroxybutanoyl-CoA. The catalysed reaction is a (3Z)-enoyl-CoA = a 4-saturated (2E)-enoyl-CoA. It catalyses the reaction a (3E)-enoyl-CoA = a 4-saturated (2E)-enoyl-CoA. It participates in lipid metabolism; fatty acid beta-oxidation. Functionally, involved in the aerobic and anaerobic degradation of long-chain fatty acids via beta-oxidation cycle. Catalyzes the formation of 3-oxoacyl-CoA from enoyl-CoA via L-3-hydroxyacyl-CoA. It can also use D-3-hydroxyacyl-CoA and cis-3-enoyl-CoA as substrate. The polypeptide is Fatty acid oxidation complex subunit alpha (Pectobacterium atrosepticum (strain SCRI 1043 / ATCC BAA-672) (Erwinia carotovora subsp. atroseptica)).